We begin with the raw amino-acid sequence, 596 residues long: Lamin-B2 (596 aa).

The tract at residues 1–20 is disordered; that stretch reads MASLPPHAGPATPLSPTRLS. The segment at 1-26 is head; that stretch reads MASLPPHAGPATPLSPTRLSRLQEKE. Threonine 12 bears the Phosphothreonine mark. Phosphoserine is present on serine 15. The 357-residue stretch at 24-380 folds into the IF rod domain; the sequence is EKEELRELND…KLLEGEEERL (357 aa). The coil 1A stretch occupies residues 27–61; the sequence is ELRELNDRLAHYIDRVRALELENDRLLLRISEKEE. The residue at position 59 (lysine 59) is an N6-acetyllysine; alternate. Lysine 59 is covalently cross-linked (Glycyl lysine isopeptide (Lys-Gly) (interchain with G-Cter in SUMO2); alternate). Residues 62 to 73 are linker 1; that stretch reads VTTREVSGIKTL. The interval 74–207 is coil 1B; the sequence is YESELADARR…AFSKSVFEEE (134 aa). Residues lysine 173 and lysine 233 each participate in a glycyl lysine isopeptide (Lys-Gly) (interchain with G-Cter in SUMO2) cross-link. Residues 208-234 form a linker 2 region; it reads VRETRRRHERRLVEVDSSRQQEYDFKM. The coil 2 stretch occupies residues 235 to 378; it reads AQALEDLRSQ…YRKLLEGEEE (144 aa). Phosphoserine is present on residues serine 294 and serine 385. A disordered region spans residues 376–440; the sequence is EEERLKLSPS…ASRVSSGSRL (65 aa). The tract at residues 379–596 is tail; sequence RLKLSPSPSS…RTTSRGCRLM (218 aa). The segment covering 382-403 has biased composition (low complexity); it reads LSPSPSSRITISRATSSSSSSS. O-linked (GlcNAc) threonine glycosylation is present at threonine 391. A phosphoserine mark is found at serine 398, serine 400, and serine 402. Residue arginine 413 is modified to Omega-N-methylarginine. The Nuclear localization signal motif lies at 415–420; sequence KRRRLE. Residues 425-439 are compositionally biased toward low complexity; that stretch reads SGSPSRASRVSSGSR. The 122-residue stretch at 438–559 folds into the LTD domain; it reads SRLAQQTVAT…VKAAKHSSVQ (122 aa). Residue lysine 465 forms a Glycyl lysine isopeptide (Lys-Gly) (interchain with G-Cter in SUMO2) linkage. Serine 473 is modified (phosphoserine). Residues 552–596 are disordered; it reads AAKHSSVQGRENGEEEEEEEAEFGEEDLFHQQGDPRTTSRGCRLM. Residues 564-577 are compositionally biased toward acidic residues; sequence GEEEEEEEAEFGEE. Positions 585–596 are enriched in polar residues; the sequence is DPRTTSRGCRLM. Cysteine 593 bears the Cysteine methyl ester mark. Residue cysteine 593 is the site of S-farnesyl cysteine attachment. Residues 594-596 constitute a propeptide, removed in mature form; sequence RLM.

This sequence belongs to the intermediate filament family. In terms of assembly, dimer. Lamin dimers then assemble into dimeric head-to-tail polymers. Ultimately, two head-to-tail polymers assemble laterally into a protofilament with a uniformly shaped rod of 3.5 nm in diameter. Interacts with TMEM43. Post-translationally, B-type lamins undergo a series of modifications, such as farnesylation and phosphorylation. Increased phosphorylation of the lamins occurs before envelope disintegration and probably plays a role in regulating lamin associations. In terms of processing, phosphorylation plays a key role in lamin organization, subcellular localization and nuclear envelope disintegration. Phosphorylation by CDK1 at Ser-15 and Ser-385 at the onset of mitosis drives lamin disassembly and nuclear envelope breakdown. In terms of tissue distribution, germ cell-specific.

It is found in the nucleus lamina. In terms of biological role, lamins are intermediate filament proteins that assemble into a filamentous meshwork, and which constitute the major components of the nuclear lamina, a fibrous layer on the nucleoplasmic side of the inner nuclear membrane. Lamins provide a framework for the nuclear envelope, bridging the nuclear envelope and chromatin, thereby playing an important role in nuclear assembly, chromatin organization, nuclear membrane and telomere dynamics. The structural integrity of the lamina is strictly controlled by the cell cycle, as seen by the disintegration and formation of the nuclear envelope in prophase and telophase, respectively. The chain is Lamin-B2 (Lmnb2) from Mus musculus (Mouse).